Consider the following 599-residue polypeptide: Beta-glucuronidase (599 aa).

Aspartate 160 and asparagine 407 together coordinate D-glucuronate. The active-site Proton donor is glutamate 408. The D-glucuronate site is built by asparagine 462, tyrosine 468, glutamate 501, tryptophan 546, and lysine 565. Glutamate 501 (nucleophile) is an active-site residue. An N-K motif motif is present at residues 563 to 565; it reads NHK.

It belongs to the glycosyl hydrolase 2 family.

The catalysed reaction is a beta-D-glucuronoside + H2O = D-glucuronate + an alcohol. Its activity is regulated as follows. Inhibited by a set of synthetic compounds like thio-urea derivatives and analogs. Inhibitors of gut microbial beta-glucuronidases are expected to block the reactivation of glucuronidated cancer drugs, and to alleviate drug-induced GI toxicity. Its function is as follows. Displays beta-glucuronidase activity with the artificial substrate p-nitrophenyl-beta-D-glucuronide (PNPG). Is likely capable of scavenging glucuronate from a range of chemically distinct xenobiotic and endobiotic glucuronides present in the gastrointestinal (GI) tract, to be able to utilize these diverse sources of carbon. As part of the GI microbiome, this enzyme would be able to reactivate glucuronide drug conjugates, such reactivated compounds can significantly damage the GI tract. In Streptococcus agalactiae serotype V (strain ATCC BAA-611 / 2603 V/R), this protein is Beta-glucuronidase.